We begin with the raw amino-acid sequence, 865 residues long: MKKAKKEKKEKIIKPDGPINFNRSIMAAFEKQSRGKICPLCETKFSLASYKSHMNTCNVADDDEEIEVIATYTRDEAILMRAGPEIILGDASFSDKSENPTKRRKTDEREVPSEDDIVPEVPGPSGIVKNHEMPSESLDVTEISENIEKVIKKSPEWINHRRRSSRLLQNSQKDQADNANKEDPVKKETATISEVLQAIERFEQRVSGPEQTWPYYIKITIKIMKRVISTEKFDGTFYADDFWLPSDIITFYRFVELLSEGAKCLLVRLFIRKPAWYNLEKLEQKYPEIPNIKEAVSELAKGHFIDDDSSMKTLDEALQISDVVALKNVTKKFKLDGTKNRQELIQSLRKFAQSQQSIFGGTGNVEKSILKSLKQELGPCVRVRGGFVDLFKCLFTIYCPVTTNSANVIDNPSTTNVYQDLLYLMLSVANGTVQFPAPNPCPIIASFYKNRNMLQDYMISKSLEIAIVSQMSNGNLDAALDLAIDAKEFIEQMSDDDKRYYESLEIHERKFTSIWVFTRCCGHASSILERQKKYGMAVEWQKDLLITNKDIQSYCIDSRGIWWDRMLLNLDSHLKEKKECAKMIQIALQDPSILEKELLMIQDRALKLKEMPADFVTPINIGNPEKKTITANVITKSLGDGRINRFMIRDHETDDDVECSVEEVTRRHYLENEGFSTGVHDEGSTWHTLFGLFFYDVIFATDESVESTWLSELQDCPSDLSNTLYSKRKEKFEDRFVWLEEAEQELIEENIRKIWDLKHNETNRECSWKQFPMGAEDCVSFFQCIPRPALILILRRLAENYRNSRSGFPDLTLWNPETKRVAVVEVKGPGDRLSTKQRLWLAIFADSGIRAEVCHVAAQNSRLLV.

A UBZ4-type zinc finger spans residues 35-62 (GKICPLCETKFSLASYKSHMNTCNVADD). Zn(2+) is bound by residues Cys38, Cys41, His53, and Cys57. 2 disordered regions span residues 90–140 (DASF…SLDV) and 162–187 (RRSS…PVKK). Basic and acidic residues-rich tracts occupy residues 93-112 (FSDK…REVP) and 174-187 (DQAD…PVKK). The Mn(2+) site is built by Glu682, Asp810, Glu825, and Val826. In terms of domain architecture, VRR-NUC spans 744-857 (QELIEENIRK…GIRAEVCHVA (114 aa)).

Belongs to the FAN1 family. Requires Mn(2+) as cofactor. Mg(2+) serves as cofactor.

The protein localises to the nucleus. The enzyme catalyses Hydrolytically removes 5'-nucleotides successively from the 3'-hydroxy termini of 3'-hydroxy-terminated oligonucleotides.. Nuclease required for the repair of DNA interstrand cross-links (ICL). Acts as a 5'-3' exonuclease that anchors at a cut end of DNA and cleaves DNA successively at every third nucleotide, allowing to excise an ICL from one strand through flanking incisions. This is Fanconi-associated nuclease 1 homolog (fan-1) from Caenorhabditis elegans.